A 350-amino-acid polypeptide reads, in one-letter code: Leucine-rich repeat-containing protein 23 (350 aa).

Residues 1 to 54 (MEDETLEDGPEEEEEDEEEGTAEETNQDVTERDEEEEAEKDEEEDKEEEEEAEK) show a composition bias toward acidic residues. The interval 1–64 (MEDETLEDGP…EEPPPHMPLS (64 aa)) is disordered. LRR repeat units lie at residues 107–128 (HLRYVDLSQNSLQDLSPLGALT), 129–150 (HLLSLRADHNQLVSVSGLGELP), 151–171 (YLQVASFAQNRIKSLQGFGHP), 172–193 (RLETLNLIGNELRDLEGLECSN), 196–216 (SLHTLELRSNQLLSTAGLNLP), 217–238 (SLRELYLGQNNISRLEGLEALV), 239–260 (NLTTLHLRDNQLESLDGFSEHL), and 262–283 (ALQYLNLRSNMVAKLQEVQKLY). The LRRCT domain maps to 296–334 (NPCEEEEGYRMETLIALPQLERLDKDFFEEEEKREAAET). Residues 314–344 (QLERLDKDFFEEEEKREAAETKKAREEEMAE) are a coiled coil. The disordered stretch occupies residues 325 to 350 (EEEKREAAETKKAREEEMAEPGEKGN).

Its subcellular location is the cytoplasm. It is found in the cytoskeleton. The protein localises to the flagellum axoneme. The polypeptide is Leucine-rich repeat-containing protein 23 (lrrc23) (Xenopus tropicalis (Western clawed frog)).